Consider the following 625-residue polypeptide: Glutamine--fructose-6-phosphate aminotransferase [isomerizing] (625 aa).

C2 (nucleophile; for GATase activity) is an active-site residue. Residues 2-229 (CGLVGYVGQR…QDQAVVITAD (228 aa)) enclose the Glutamine amidotransferase type-2 domain. 2 consecutive SIS domains span residues 298 to 437 (SDQE…ARGT) and 470 to 615 (LAYR…VDKP). The active-site For Fru-6P isomerization activity is the K620.

Homodimer.

It is found in the cytoplasm. The catalysed reaction is D-fructose 6-phosphate + L-glutamine = D-glucosamine 6-phosphate + L-glutamate. In terms of biological role, catalyzes the first step in hexosamine metabolism, converting fructose-6P into glucosamine-6P using glutamine as a nitrogen source. This chain is Glutamine--fructose-6-phosphate aminotransferase [isomerizing], found in Mycobacterium leprae (strain TN).